Reading from the N-terminus, the 966-residue chain is Isoleucine--tRNA ligase (966 aa).

Basic and acidic residues predominate over residues 1 to 16; sequence MSDDKRAKSDKNEKNK. Residues 1 to 24 are disordered; it reads MSDDKRAKSDKNEKNKYPVNLLDT. A 'HIGH' region motif is present at residues 69–79; that stretch reads PYANGDIHIGH. Glu-599 provides a ligand contact to L-isoleucyl-5'-AMP. A 'KMSKS' region motif is present at residues 640 to 644; the sequence is KMSKS. Lys-643 lines the ATP pocket. Residues Cys-929, Cys-932, Cys-949, and Cys-952 each coordinate Zn(2+).

This sequence belongs to the class-I aminoacyl-tRNA synthetase family. IleS type 1 subfamily. In terms of assembly, monomer. Zn(2+) serves as cofactor.

The protein localises to the cytoplasm. The enzyme catalyses tRNA(Ile) + L-isoleucine + ATP = L-isoleucyl-tRNA(Ile) + AMP + diphosphate. In terms of biological role, catalyzes the attachment of isoleucine to tRNA(Ile). As IleRS can inadvertently accommodate and process structurally similar amino acids such as valine, to avoid such errors it has two additional distinct tRNA(Ile)-dependent editing activities. One activity is designated as 'pretransfer' editing and involves the hydrolysis of activated Val-AMP. The other activity is designated 'posttransfer' editing and involves deacylation of mischarged Val-tRNA(Ile). This is Isoleucine--tRNA ligase from Cupriavidus taiwanensis (strain DSM 17343 / BCRC 17206 / CCUG 44338 / CIP 107171 / LMG 19424 / R1) (Ralstonia taiwanensis (strain LMG 19424)).